A 345-amino-acid chain; its full sequence is NADPH dehydrogenase (345 aa).

23-26 (SPMC) provides a ligand contact to FMN. Tyrosine 28 serves as a coordination point for substrate. Residues alanine 60 and glutamine 102 each contribute to the FMN site. Residue 164–167 (HGAH) participates in substrate binding. FMN-binding positions include arginine 215 and 307-308 (GR).

Belongs to the NADH:flavin oxidoreductase/NADH oxidase family. NamA subfamily. In terms of assembly, homotetramer. It depends on FMN as a cofactor.

The enzyme catalyses A + NADPH + H(+) = AH2 + NADP(+). In terms of biological role, catalyzes the reduction of the double bond of an array of alpha,beta-unsaturated aldehydes and ketones. It also reduces the nitro group of nitroester and nitroaromatic compounds. It could have a role in detoxification processes. The protein is NADPH dehydrogenase of Bacillus thuringiensis subsp. konkukian (strain 97-27).